The primary structure comprises 200 residues: 3-isopropylmalate dehydratase small subunit (200 aa).

This sequence belongs to the LeuD family. LeuD type 1 subfamily. As to quaternary structure, heterodimer of LeuC and LeuD.

It carries out the reaction (2R,3S)-3-isopropylmalate = (2S)-2-isopropylmalate. It functions in the pathway amino-acid biosynthesis; L-leucine biosynthesis; L-leucine from 3-methyl-2-oxobutanoate: step 2/4. In terms of biological role, catalyzes the isomerization between 2-isopropylmalate and 3-isopropylmalate, via the formation of 2-isopropylmaleate. In Vibrio vulnificus (strain YJ016), this protein is 3-isopropylmalate dehydratase small subunit.